Here is a 372-residue protein sequence, read N- to C-terminus: UDP-N-acetylglucosamine--N-acetylmuramyl-(pentapeptide) pyrophosphoryl-undecaprenol N-acetylglucosamine transferase (372 aa).

UDP-N-acetyl-alpha-D-glucosamine is bound by residues 10 to 12, asparagine 124, arginine 166, serine 196, isoleucine 256, and glutamine 301; that span reads TGG.

It belongs to the glycosyltransferase 28 family. MurG subfamily.

Its subcellular location is the cell membrane. It carries out the reaction di-trans,octa-cis-undecaprenyl diphospho-N-acetyl-alpha-D-muramoyl-L-alanyl-D-glutamyl-meso-2,6-diaminopimeloyl-D-alanyl-D-alanine + UDP-N-acetyl-alpha-D-glucosamine = di-trans,octa-cis-undecaprenyl diphospho-[N-acetyl-alpha-D-glucosaminyl-(1-&gt;4)]-N-acetyl-alpha-D-muramoyl-L-alanyl-D-glutamyl-meso-2,6-diaminopimeloyl-D-alanyl-D-alanine + UDP + H(+). Its pathway is cell wall biogenesis; peptidoglycan biosynthesis. In terms of biological role, cell wall formation. Catalyzes the transfer of a GlcNAc subunit on undecaprenyl-pyrophosphoryl-MurNAc-pentapeptide (lipid intermediate I) to form undecaprenyl-pyrophosphoryl-MurNAc-(pentapeptide)GlcNAc (lipid intermediate II). This chain is UDP-N-acetylglucosamine--N-acetylmuramyl-(pentapeptide) pyrophosphoryl-undecaprenol N-acetylglucosamine transferase, found in Desulforamulus reducens (strain ATCC BAA-1160 / DSM 100696 / MI-1) (Desulfotomaculum reducens).